Reading from the N-terminus, the 843-residue chain is Envelope glycoprotein gp160 (843 aa).

A signal peptide spans 1-31 (MRATEIRKNYQHLWKGGTLLLGMLMICSAAE). Residues 32 to 671 (QLWVTVYYGV…ITKWLWYIKI (640 aa)) are Extracellular-facing. A disulfide bond links Cys53 and Cys73. N-linked (GlcNAc...) asparagine; by host glycans are attached at residues Asn87, Asn129, Asn135, Asn138, Asn154, Asn158, Asn184, Asn193, Asn230, Asn237, Asn258, Asn272, Asn285, Asn291, Asn297, Asn327, and Asn351. 5 disulfide bridges follow: Cys118–Cys201, Cys125–Cys192, Cys130–Cys155, Cys214–Cys243, and Cys224–Cys235. Residues 130–154 (CTDLRNATNTTSSSWETMEKGEIKN) form a V1 region. Positions 155 to 192 (CSFNITTSIRDKVQKEYALFYNLDVVPIDNASYRLISC) are V2. The V3 stretch occupies residues 292-325 (CTRPNNNTRKSINIGPGRALYTTGEIIGDIRQAH). The cysteines at positions 292 and 326 are disulfide-linked. The interval 359-369 (SSGGDPEIVTH) is CD4-binding loop. Disulfide bonds link Cys373–Cys432 and Cys380–Cys405. Positions 380–405 (CNSTQLFTWNDTRKLNNTGRNITLPC) are V4. Residues Asn381, Asn389, Asn395, Asn400, Asn435, and Asn450 are each glycosylated (N-linked (GlcNAc...) asparagine; by host). V5 stretches follow at residues 448–458 (DTNGTEIFRPG) and 450–458 (NGTEIFRPG). Residues 499–519 (AVGLGALFLGFLGAAGSTMGA) are fusion peptide. The interval 561–579 (KQLQARVLAVERYLRDQQL) is immunosuppression. Cys585 and Cys591 are joined by a disulfide. 4 N-linked (GlcNAc...) asparagine; by host glycosylation sites follow: Asn598, Asn603, Asn612, and Asn624. Residues 620-654 (REIDNYTHIIYSLIEQSQNQQEKNEQELLALDKWA) adopt a coiled-coil conformation. An MPER; binding to GalCer region spans residues 649-670 (ALDKWASLWNWFDITKWLWYIK). A helical membrane pass occupies residues 672-692 (FIMIVGGLIGLRIVFVVLSIV). Residues 693–843 (NRVRQGYSPL…IRQGLERALL (151 aa)) lie on the Cytoplasmic side of the membrane. The YXXL motif; contains endocytosis signal signature appears at 699–702 (YSPL). A disordered region spans residues 706–731 (THLPAQRGPDRPDGIEEEGGERDRDR). Cys751 carries S-palmitoyl cysteine; by host lipidation. The short motif at 842–843 (LL) is the Di-leucine internalization motif element.

Belongs to the HIV-1 env protein family. As to quaternary structure, the mature envelope protein (Env) consists of a homotrimer of non-covalently associated gp120-gp41 heterodimers. The resulting complex protrudes from the virus surface as a spike. There seems to be as few as 10 spikes on the average virion. Interacts with host CD4, CCR5 and CXCR4. Gp120 also interacts with the C-type lectins CD209/DC-SIGN and CLEC4M/DC-SIGNR (collectively referred to as DC-SIGN(R)). Gp120 and gp41 interact with GalCer. Gp120 interacts with host ITGA4/ITGB7 complex; on CD4+ T-cells, this interaction results in rapid activation of integrin ITGAL/LFA-1, which facilitates efficient cell-to-cell spreading of HIV-1. Gp120 interacts with cell-associated heparan sulfate; this interaction increases virus infectivity on permissive cells and may be involved in infection of CD4- cells. In terms of assembly, the mature envelope protein (Env) consists of a homotrimer of non-covalently associated gp120-gp41 heterodimers. The resulting complex protrudes from the virus surface as a spike. There seems to be as few as 10 spikes on the average virion. In terms of processing, highly glycosylated by host. The high number of glycan on the protein is reffered to as 'glycan shield' because it contributes to hide protein sequence from adaptive immune system. Post-translationally, palmitoylation of the transmembrane protein and of Env polyprotein (prior to its proteolytic cleavage) is essential for their association with host cell membrane lipid rafts. Palmitoylation is therefore required for envelope trafficking to classical lipid rafts, but not for viral replication. Specific enzymatic cleavages in vivo yield mature proteins. Envelope glycoproteins are synthesized as an inactive precursor that is heavily N-glycosylated and processed likely by host cell furin in the Golgi to yield the mature SU and TM proteins. The cleavage site between SU and TM requires the minimal sequence [KR]-X-[KR]-R. About 2 of the 9 disulfide bonds of gp41 are reduced by P4HB/PDI, following binding to CD4 receptor.

The protein resides in the virion membrane. It is found in the host cell membrane. It localises to the host endosome membrane. In terms of biological role, oligomerizes in the host endoplasmic reticulum into predominantly trimers. In a second time, gp160 transits in the host Golgi, where glycosylation is completed. The precursor is then proteolytically cleaved in the trans-Golgi and thereby activated by cellular furin or furin-like proteases to produce gp120 and gp41. Its function is as follows. Attaches the virus to the host lymphoid cell by binding to the primary receptor CD4. This interaction induces a structural rearrangement creating a high affinity binding site for a chemokine coreceptor like CXCR4 and/or CCR5. Acts as a ligand for CD209/DC-SIGN and CLEC4M/DC-SIGNR, which are respectively found on dendritic cells (DCs), and on endothelial cells of liver sinusoids and lymph node sinuses. These interactions allow capture of viral particles at mucosal surfaces by these cells and subsequent transmission to permissive cells. HIV subverts the migration properties of dendritic cells to gain access to CD4+ T-cells in lymph nodes. Virus transmission to permissive T-cells occurs either in trans (without DCs infection, through viral capture and transmission), or in cis (following DCs productive infection, through the usual CD4-gp120 interaction), thereby inducing a robust infection. In trans infection, bound virions remain infectious over days and it is proposed that they are not degraded, but protected in non-lysosomal acidic organelles within the DCs close to the cell membrane thus contributing to the viral infectious potential during DCs' migration from the periphery to the lymphoid tissues. On arrival at lymphoid tissues, intact virions recycle back to DCs' cell surface allowing virus transmission to CD4+ T-cells. Acts as a class I viral fusion protein. Under the current model, the protein has at least 3 conformational states: pre-fusion native state, pre-hairpin intermediate state, and post-fusion hairpin state. During fusion of viral and target intracellular membranes, the coiled coil regions (heptad repeats) assume a trimer-of-hairpins structure, positioning the fusion peptide in close proximity to the C-terminal region of the ectodomain. The formation of this structure appears to drive apposition and subsequent fusion of viral and target cell membranes. Complete fusion occurs in host cell endosomes and is dynamin-dependent, however some lipid transfer might occur at the plasma membrane. The virus undergoes clathrin-dependent internalization long before endosomal fusion, thus minimizing the surface exposure of conserved viral epitopes during fusion and reducing the efficacy of inhibitors targeting these epitopes. Membranes fusion leads to delivery of the nucleocapsid into the cytoplasm. This Homo sapiens (Human) protein is Envelope glycoprotein gp160.